Here is a 253-residue protein sequence, read N- to C-terminus: Troponin T, fast skeletal muscle isoforms (253 aa).

The segment covering 1 to 25 (MSDTEEVEHGEEEYEEEEEVQEEEV) has biased composition (acidic residues). Disordered regions lie at residues 1–58 (MSDT…DIQK) and 97–178 (RAER…VLAE). Ser-2 carries the N-acetylserine modification. Basic and acidic residues-rich tracts occupy residues 46 to 58 (PEGEKVDFDDIQK), 97 to 139 (RAER…DDLK), and 167 to 178 (TARETKKKVLAE).

This sequence belongs to the troponin T family.

Troponin T is the tropomyosin-binding subunit of troponin, the thin filament regulatory complex which confers calcium-sensitivity to striated muscle actomyosin ATPase activity. The protein is Troponin T, fast skeletal muscle isoforms (TNNT3) of Coturnix japonica (Japanese quail).